Consider the following 263-residue polypeptide: Protein maestro (263 aa).

A disordered region spans residues 1-21 (MDQTPRRMLGQPLSSPATQPK). Residues 128-163 (SFFIDITLQTRTLLDDENDSLRYSAFVLFGQLADLA) form an HEAT repeat.

The protein resides in the nucleus. It localises to the nucleolus. This is Protein maestro (MRO) from Bos taurus (Bovine).